We begin with the raw amino-acid sequence, 388 residues long: Galactokinase (388 aa).

33-36 (EHTD) provides a ligand contact to substrate. ATP contacts are provided by residues Ser67 and 124–130 (GAGLSSS). Positions 130 and 162 each coordinate Mg(2+). Asp174 serves as the catalytic Proton acceptor. Tyr224 is a substrate binding site.

The protein belongs to the GHMP kinase family. GalK subfamily.

It localises to the cytoplasm. It carries out the reaction alpha-D-galactose + ATP = alpha-D-galactose 1-phosphate + ADP + H(+). It participates in carbohydrate metabolism; galactose metabolism. Its function is as follows. Catalyzes the transfer of the gamma-phosphate of ATP to D-galactose to form alpha-D-galactose-1-phosphate (Gal-1-P). This Lacticaseibacillus casei (strain BL23) (Lactobacillus casei) protein is Galactokinase.